The sequence spans 338 residues: Ketol-acid reductoisomerase (NADP(+)) (338 aa).

The KARI N-terminal Rossmann domain maps to 1–181 (MKVYYDKDCN…GGGRSGIIET (181 aa)). Residues 24-27 (YGSQ), R47, S50, S52, and 82-85 (DETQ) contribute to the NADP(+) site. Residue H107 is part of the active site. G133 contacts NADP(+). A KARI C-terminal knotted domain is found at 182–327 (NFREETETDL…ARLRAMMPWI (146 aa)). Mg(2+)-binding residues include D190, E194, E226, and E230. S251 is a substrate binding site.

This sequence belongs to the ketol-acid reductoisomerase family. Requires Mg(2+) as cofactor.

It carries out the reaction (2R)-2,3-dihydroxy-3-methylbutanoate + NADP(+) = (2S)-2-acetolactate + NADPH + H(+). The enzyme catalyses (2R,3R)-2,3-dihydroxy-3-methylpentanoate + NADP(+) = (S)-2-ethyl-2-hydroxy-3-oxobutanoate + NADPH + H(+). Its pathway is amino-acid biosynthesis; L-isoleucine biosynthesis; L-isoleucine from 2-oxobutanoate: step 2/4. It functions in the pathway amino-acid biosynthesis; L-valine biosynthesis; L-valine from pyruvate: step 2/4. In terms of biological role, involved in the biosynthesis of branched-chain amino acids (BCAA). Catalyzes an alkyl-migration followed by a ketol-acid reduction of (S)-2-acetolactate (S2AL) to yield (R)-2,3-dihydroxy-isovalerate. In the isomerase reaction, S2AL is rearranged via a Mg-dependent methyl migration to produce 3-hydroxy-3-methyl-2-ketobutyrate (HMKB). In the reductase reaction, this 2-ketoacid undergoes a metal-dependent reduction by NADPH to yield (R)-2,3-dihydroxy-isovalerate. The chain is Ketol-acid reductoisomerase (NADP(+)) from Pelobacter propionicus (strain DSM 2379 / NBRC 103807 / OttBd1).